The chain runs to 371 residues: MGTAAVAAAERPKQRRSSHLWKKALLHFSLCFVMGFFTGFAPSSSSSWRAGSGGGGGVQPRHQLAASHVAVNQQVSLVPDAAAAEAAGVGNGAVVDVGDDEGGEGARRMLIVVTTTRGERRRRRGELLRLAHTLRLVRPPVVWVVVEPAADAAATAEVLRGTGVMYRHLAFRPEENFTTADAEAHAQRNAALAHVEKHRLSGVVHFADAAGVYDAHFFDEIRQIEAFGTWPVATMSAGEKKVVVEGPLCSDSKVVGWFSRDFNDGTTRAVTYNTEADLNPAGAAGTRAHTIDVSGFAFNSSILWDPERWGRPTSLPDTSQDSIKFVQEVVLEDRTKLKGIPSDCSQIMVWQYTMPMQVHAQTSTPKTHNRR.

Topologically, residues 1 to 19 (MGTAAVAAAERPKQRRSSH) are cytoplasmic. A helical; Signal-anchor for type II membrane protein transmembrane segment spans residues 20-42 (LWKKALLHFSLCFVMGFFTGFAP). At 43-371 (SSSSSWRAGS…TSTPKTHNRR (329 aa)) the chain is on the lumenal side. Asn-176 and Asn-299 each carry an N-linked (GlcNAc...) asparagine glycan.

This sequence belongs to the glycosyltransferase 43 family.

It localises to the golgi apparatus membrane. Probable beta-1,4-xylosyltransferase involved in xylan biosynthesis in cell walls. This Oryza sativa subsp. japonica (Rice) protein is Probable beta-1,4-xylosyltransferase GT43A.